Here is a 337-residue protein sequence, read N- to C-terminus: MNKQDFYFDLPSELIAQYPLANRSDSRLLIYNRQTEEYGHYQFREIADFLQPGDLLVMNDSKVIPARLYGHKATGGKVELLVERITGDFTFLAHIKASKSLKSNDLIYLDAGKRLEVLQRQDDLFLCKASENILDLLNDLGHIPLPPYIDREDESLDKERYQTVYAKCAGSVAAPTAGLHFDEAVLSSIRARGVNIAYITLHVGAGTFRPVRCERIQDHKMHSEWFTVSPDLCTAVKAAKSMGNRVIAVGTTALRSLESAAMGGELIPCSRDTDIFIYPGYQFKVCDGLITNFHLPESTLVMLVSAFIGHQECMALYQEAIDKRYRFFSYGDASLLL.

It belongs to the QueA family. Monomer.

It is found in the cytoplasm. It catalyses the reaction 7-aminomethyl-7-carbaguanosine(34) in tRNA + S-adenosyl-L-methionine = epoxyqueuosine(34) in tRNA + adenine + L-methionine + 2 H(+). Its pathway is tRNA modification; tRNA-queuosine biosynthesis. Functionally, transfers and isomerizes the ribose moiety from AdoMet to the 7-aminomethyl group of 7-deazaguanine (preQ1-tRNA) to give epoxyqueuosine (oQ-tRNA). This is S-adenosylmethionine:tRNA ribosyltransferase-isomerase from Legionella pneumophila (strain Lens).